Consider the following 106-residue polypeptide: Large ribosomal subunit protein P1B (106 aa).

Serine 2 bears the N-acetylserine mark. Residues 69–82 (AGAASGAAAAGGDA) are compositionally biased toward low complexity. The tract at residues 69–106 (AGAASGAAAAGGDAAAEEEKEEEAAEESDDDMGFGLFD) is disordered. Residues 83 to 100 (AAEEEKEEEAAEESDDDM) are compositionally biased toward acidic residues. Residue serine 96 is modified to Phosphoserine.

The protein belongs to the eukaryotic ribosomal protein P1/P2 family. As to quaternary structure, component of the large ribosomal subunit (LSU). Mature yeast ribosomes consist of a small (40S) and a large (60S) subunit. The 40S small subunit contains 1 molecule of ribosomal RNA (18S rRNA) and 33 different proteins (encoded by 57 genes). The large 60S subunit contains 3 rRNA molecules (25S, 5.8S and 5S rRNA) and 46 different proteins (encoded by 81 genes). The 5 acidic ribosomal P-proteins form the stalk structure of the 60S subunit. They are organized as a pentameric complex in which uL10/P0 interacts with 2 heterodimers, P1A-P2B and P1B-P2A.

The protein resides in the cytoplasm. Component of the ribosome, a large ribonucleoprotein complex responsible for the synthesis of proteins in the cell. The small ribosomal subunit (SSU) binds messenger RNAs (mRNAs) and translates the encoded message by selecting cognate aminoacyl-transfer RNA (tRNA) molecules. The large subunit (LSU) contains the ribosomal catalytic site termed the peptidyl transferase center (PTC), which catalyzes the formation of peptide bonds, thereby polymerizing the amino acids delivered by tRNAs into a polypeptide chain. The nascent polypeptides leave the ribosome through a tunnel in the LSU and interact with protein factors that function in enzymatic processing, targeting, and the membrane insertion of nascent chains at the exit of the ribosomal tunnel. The chain is Large ribosomal subunit protein P1B from Saccharomyces cerevisiae (strain ATCC 204508 / S288c) (Baker's yeast).